Consider the following 1372-residue polypeptide: DNA-directed RNA polymerase subunit beta (1372 aa).

This sequence belongs to the RNA polymerase beta chain family. The RNAP catalytic core consists of 2 alpha, 1 beta, 1 beta' and 1 omega subunit. When a sigma factor is associated with the core the holoenzyme is formed, which can initiate transcription.

It carries out the reaction RNA(n) + a ribonucleoside 5'-triphosphate = RNA(n+1) + diphosphate. In terms of biological role, DNA-dependent RNA polymerase catalyzes the transcription of DNA into RNA using the four ribonucleoside triphosphates as substrates. This Bradyrhizobium sp. (strain BTAi1 / ATCC BAA-1182) protein is DNA-directed RNA polymerase subunit beta.